A 340-amino-acid polypeptide reads, in one-letter code: DNA repair protein RAD51 homolog A (340 aa).

Low complexity predominate over residues 1 to 14 (MSSAAQQQQKAAAA). The interval 1-21 (MSSAAQQQQKAAAAEQEEVEH) is disordered. The HhH domain occupies 49–78 (TVEAVAYTPRKDLLQIKGISEAKADKIIEA). 128-135 (GEFRSGKT) contacts ATP.

The protein belongs to the RecA family. RAD51 subfamily. As to quaternary structure, self-associates and may interact with XRCC3 homolog. Highly expressed in mitotic and meiotic tissues, but low levels in differentiated tissues.

It is found in the nucleus. In terms of biological role, binds to single and double-stranded DNA and exhibits DNA-dependent ATPase activity. Unwinds duplex DNA. Component of the meiotic recombination pathway. Seems to play a role in mediating chromosome homology search, chromosome pairing and synapsis at early stages and probably chromosome crossing-over at later stages in meiosis. Probably is involved in the repair of meiotic double strand breaks (DBSs) and in homologous recombination. This is DNA repair protein RAD51 homolog A (RAD51A) from Zea mays (Maize).